A 268-amino-acid polypeptide reads, in one-letter code: (+)-cis,trans-nepetalactol synthase NEPS2 (268 aa).

NAD(+)-binding positions include 16–22 (GGASGIG), 41–43 (DIQ), 65–66 (DI), Asn-92, 163–167 (YVMSK), and 196–200 (VLTPL).

Belongs to the short-chain dehydrogenases/reductases (SDR) family.

It catalyses the reaction (S)-8-oxocitronellyl enol = cis-trans-nepetalactol. Functionally, functions as a non-oxidoreductive cyclase to promote the formation of cis-trans-nepetalactol. Cis-trans-nepetalactol is then oxidized by NEPS1 into cis-trans-nepetalactone, which belongs to a family of metabolites that are both insect-repellent and have euphoric effect in cats. Binds NAD(+) as classical short-chain dehydrogenase/reductase (SDR), but does not utilize it for its redox-neutral cyclase activity. The chain is (+)-cis,trans-nepetalactol synthase NEPS2 from Nepeta racemosa (Catmint).